The following is a 246-amino-acid chain: UDP-N-acetyl-D-mannosaminuronic acid transferase (246 aa).

Belongs to the glycosyltransferase 26 family.

The enzyme catalyses UDP-N-acetyl-alpha-D-mannosaminouronate + N-acetyl-alpha-D-glucosaminyl-di-trans,octa-cis-undecaprenyl diphosphate = beta-D-ManNAcA-(1-&gt;4)-alpha-D-GlcNAc-di-trans,octa-cis-undecaprenyl diphosphate + UDP + H(+). It participates in bacterial outer membrane biogenesis; enterobacterial common antigen biosynthesis. Its function is as follows. Catalyzes the synthesis of Und-PP-GlcNAc-ManNAcA (Lipid II), the second lipid-linked intermediate involved in enterobacterial common antigen (ECA) synthesis. This Salmonella choleraesuis (strain SC-B67) protein is UDP-N-acetyl-D-mannosaminuronic acid transferase.